We begin with the raw amino-acid sequence, 57 residues long: UPF0391 membrane protein bsl5717 (57 aa).

2 helical membrane-spanning segments follow: residues 6–26 (WALI…TGIS) and 35–55 (FLFY…LTIF).

The protein belongs to the UPF0391 family.

The protein localises to the cell membrane. In Bradyrhizobium diazoefficiens (strain JCM 10833 / BCRC 13528 / IAM 13628 / NBRC 14792 / USDA 110), this protein is UPF0391 membrane protein bsl5717.